The following is a 764-amino-acid chain: Protein FAR1-RELATED SEQUENCE 7 (764 aa).

An FAR1 1 domain is found at 42–118 (DYYNSYATRT…QKEHNHDLGG (77 aa)). The segment at 119–144 (HIEEAQTTPRPSVQQRAPAPTKLGIS) is disordered. The span at 123 to 133 (AQTTPRPSVQQ) shows a compositional bias: polar residues. The region spanning 204–280 (QFYQAYAEVV…NKDHNHDLEP (77 aa)) is the FAR1 2 domain. The 97-residue stretch at 375-471 (AVVFDTSYRK…SAWQIRSKER (97 aa)) folds into the MULE domain. The SWIM-type zinc-finger motif lies at 650-686 (HAVTFSASNLNASCSCQMFEYEGLLCRHILKVFNLLD).

It belongs to the FHY3/FAR1 family. Expressed in hypocotyls, rosette and cauline leaves, inflorescences stems, flowers and siliques.

It localises to the nucleus. Functionally, putative transcription activator involved in regulating light control of development. The polypeptide is Protein FAR1-RELATED SEQUENCE 7 (FRS7) (Arabidopsis thaliana (Mouse-ear cress)).